We begin with the raw amino-acid sequence, 166 residues long: Cyclin-dependent kinase 4 inhibitor D (166 aa).

Met1 carries the N-acetylmethionine modification. 4 ANK repeats span residues 41-69 (FGKTALQVMMFGSPTIALELLKQGASPNV), 73-102 (SGTTPAHDAARTGFLDTLKVLVEHGADVNA), 106-135 (TGALPIHLAVREGHTSVVSFLATESDLHHR), and 138-166 (TGLTPLELARGRGAQELMDILQRHTVAPL).

The protein belongs to the CDKN2 cyclin-dependent kinase inhibitor family. As to quaternary structure, interacts with CDK6.

It is found in the nucleus. It localises to the cytoplasm. Interacts strongly with CDK4 and CDK6 and inhibits them. The sequence is that of Cyclin-dependent kinase 4 inhibitor D (CDKN2D) from Bos taurus (Bovine).